The sequence spans 700 residues: Methionine--tRNA ligase (700 aa).

The 'HIGH' region motif lies at 13-23 (PYANGDIHLGH). Zn(2+)-binding residues include Cys-144, Cys-147, Cys-157, and Cys-160. The 'KMSKS' region motif lies at 341–345 (KMSKS). Lys-344 provides a ligand contact to ATP. Positions 562–587 (QVGAPTASQDDKAAAKNTSPAAMPSS) are disordered. The span at 577–587 (KNTSPAAMPSS) shows a compositional bias: polar residues. Residues 598 to 700 (DFAKVEMKVA…DEAVIGDSLA (103 aa)) enclose the tRNA-binding domain.

This sequence belongs to the class-I aminoacyl-tRNA synthetase family. MetG type 1 subfamily. In terms of assembly, homodimer. It depends on Zn(2+) as a cofactor.

Its subcellular location is the cytoplasm. The catalysed reaction is tRNA(Met) + L-methionine + ATP = L-methionyl-tRNA(Met) + AMP + diphosphate. Its function is as follows. Is required not only for elongation of protein synthesis but also for the initiation of all mRNA translation through initiator tRNA(fMet) aminoacylation. The sequence is that of Methionine--tRNA ligase from Psychrobacter cryohalolentis (strain ATCC BAA-1226 / DSM 17306 / VKM B-2378 / K5).